Reading from the N-terminus, the 155-residue chain is MSKLRSYKKIGGDYRYGDESVARFINAVMLDGKKAVATKIVYDAFSIISERNNGEDALEIYRKAISNIAPVVEVRSKRVGGATYQIPMEVKPSRRSALAFRWLKIYAGKRGGKSMAEKLAAELMDAANDQGASVKKRDEVHRMAEANKAFAHFRF.

Belongs to the universal ribosomal protein uS7 family. As to quaternary structure, part of the 30S ribosomal subunit. Contacts proteins S9 and S11.

Its function is as follows. One of the primary rRNA binding proteins, it binds directly to 16S rRNA where it nucleates assembly of the head domain of the 30S subunit. Is located at the subunit interface close to the decoding center, probably blocks exit of the E-site tRNA. The protein is Small ribosomal subunit protein uS7 of Chlorobium chlorochromatii (strain CaD3).